Consider the following 885-residue polypeptide: Alanine--tRNA ligase (885 aa).

Zn(2+)-binding residues include histidine 563, histidine 567, cysteine 677, and histidine 681. The disordered stretch occupies residues 848 to 868; sequence LGGKGGGGRPDRAQGGAPSLA.

This sequence belongs to the class-II aminoacyl-tRNA synthetase family. Zn(2+) serves as cofactor.

The protein resides in the cytoplasm. The catalysed reaction is tRNA(Ala) + L-alanine + ATP = L-alanyl-tRNA(Ala) + AMP + diphosphate. Its function is as follows. Catalyzes the attachment of alanine to tRNA(Ala) in a two-step reaction: alanine is first activated by ATP to form Ala-AMP and then transferred to the acceptor end of tRNA(Ala). Also edits incorrectly charged Ser-tRNA(Ala) and Gly-tRNA(Ala) via its editing domain. This chain is Alanine--tRNA ligase, found in Paracoccus denitrificans (strain Pd 1222).